Consider the following 331-residue polypeptide: Cytoplasmic envelopment protein 1 (331 aa).

Belongs to the herpesviridae cytoplasmic envelopment protein 1 family. As to quaternary structure, interacts with protein ORF7; this interaction localizes protein ORF53 to the host trans-Golgi network (TGN).

The protein resides in the virion. It localises to the virion tegument. The protein localises to the host cytoplasm. Its subcellular location is the host Golgi apparatus. Its function is as follows. Plays a critical role in cytoplasmic virus egress. Participates in the final step of tegumentation and envelope acquisition within the host cytoplasm. This is Cytoplasmic envelopment protein 1 (ORF53) from Varicella-zoster virus (strain Dumas) (HHV-3).